Reading from the N-terminus, the 580-residue chain is Probable RNA-binding protein CG14230 (580 aa).

The region spanning T4–E81 is the RRM domain. Residues R89 to G100 show a composition bias toward basic and acidic residues. Disordered regions lie at residues R89 to E131 and Q173 to I211. Positions P110–Q120 are enriched in polar residues. S231 carries the phosphoserine modification. Composition is skewed to acidic residues over residues E254 to Q263 and N298 to E313. Disordered stretches follow at residues E254 to R316, S333 to S395, and P463 to N520. 2 stretches are compositionally biased toward basic and acidic residues: residues L348–Q358 and Q365–S377. Over residues A386 to S395 the composition is skewed to polar residues. S468 bears the Phosphoserine mark. T475 is modified (phosphothreonine).

The protein is Probable RNA-binding protein CG14230 of Drosophila melanogaster (Fruit fly).